A 125-amino-acid polypeptide reads, in one-letter code: uncharacterized protein (125 aa).

Residues 1–21 (MLFYHCSSFSSSSSSSSSSAS) form a disordered region. Residues 7–21 (SSFSSSSSSSSSSAS) show a composition bias toward low complexity.

This is an uncharacterized protein from Saccharomyces cerevisiae (strain ATCC 204508 / S288c) (Baker's yeast).